The following is a 496-amino-acid chain: Adenosylhomocysteinase (496 aa).

T68, D157, and E219 together coordinate substrate. 220–222 (TTT) lines the NAD(+) pocket. Positions 249 and 253 each coordinate substrate. Residues N254, 283 to 288 (GYGDVG), E306, N341, 362 to 364 (IGH), and N410 contribute to the NAD(+) site.

This sequence belongs to the adenosylhomocysteinase family. NAD(+) is required as a cofactor.

It is found in the cytoplasm. It catalyses the reaction S-adenosyl-L-homocysteine + H2O = L-homocysteine + adenosine. It participates in amino-acid biosynthesis; L-homocysteine biosynthesis; L-homocysteine from S-adenosyl-L-homocysteine: step 1/1. Its function is as follows. May play a key role in the regulation of the intracellular concentration of adenosylhomocysteine. The chain is Adenosylhomocysteinase from Mycolicibacterium paratuberculosis (strain ATCC BAA-968 / K-10) (Mycobacterium paratuberculosis).